Consider the following 172-residue polypeptide: Nicotinamide-nucleotide adenylyltransferase (172 aa).

It belongs to the archaeal NMN adenylyltransferase family.

It localises to the cytoplasm. The enzyme catalyses beta-nicotinamide D-ribonucleotide + ATP + H(+) = diphosphate + NAD(+). It participates in cofactor biosynthesis; NAD(+) biosynthesis; NAD(+) from nicotinamide D-ribonucleotide: step 1/1. This chain is Nicotinamide-nucleotide adenylyltransferase, found in Saccharolobus solfataricus (strain ATCC 35092 / DSM 1617 / JCM 11322 / P2) (Sulfolobus solfataricus).